A 196-amino-acid polypeptide reads, in one-letter code: uncharacterized protein (196 aa).

Over residues Ser122–Thr135 the composition is skewed to basic and acidic residues. Positions Ser122–Arg150 are disordered.

This is an uncharacterized protein from Leptospira interrogans.